Consider the following 147-residue polypeptide: Deoxyuridine 5'-triphosphate nucleotidohydrolase (147 aa).

DUMP is bound by residues serine 69, glycine 82, aspartate 85, tyrosine 88, lysine 93, arginine 137, phenylalanine 142, and glycine 143.

This sequence belongs to the dUTPase family. Homotrimer. The cofactor is Mg(2+).

The enzyme catalyses dUTP + H2O = dUMP + diphosphate + H(+). Its pathway is pyrimidine metabolism; dUMP biosynthesis; dUMP from dCTP (dUTP route): step 2/2. Its function is as follows. Involved in nucleotide metabolism via production of dUMP, the immediate precursor of thymidine nucleotides, and decreases the intracellular concentration of dUTP so that uracil cannot be incorporated into DNA. Shows a significant activity against dITP, another potentially mutagenic nucleotide. The chain is Deoxyuridine 5'-triphosphate nucleotidohydrolase from Saccharomyces cerevisiae (strain ATCC 204508 / S288c) (Baker's yeast).